The chain runs to 393 residues: Cysteine protease ATG4B (393 aa).

Cys-73 serves as the catalytic Nucleophile. Residues Asp-278 and His-280 contribute to the active site. An LIR motif is present at residues 388–391; it reads FEIL.

It belongs to the peptidase C54 family.

It is found in the cytoplasm. The protein resides in the cytosol. It localises to the cytoplasmic vesicle. Its subcellular location is the autophagosome. The protein localises to the endoplasmic reticulum. It is found in the mitochondrion. It catalyses the reaction [protein]-C-terminal L-amino acid-glycyl-phosphatidylethanolamide + H2O = [protein]-C-terminal L-amino acid-glycine + a 1,2-diacyl-sn-glycero-3-phosphoethanolamine. The catalysed reaction is [protein]-C-terminal L-amino acid-glycyl-phosphatidylserine + H2O = [protein]-C-terminal L-amino acid-glycine + a 1,2-diacyl-sn-glycero-3-phospho-L-serine. Functionally, cysteine protease that plays a key role in autophagy by mediating both proteolytic activation and delipidation of ATG8 family proteins. Required for canonical autophagy (macroautophagy), non-canonical autophagy as well as for mitophagy. The protease activity is required for proteolytic activation of ATG8 family proteins: cleaves the C-terminal amino acid of ATG8 proteins to reveal a C-terminal glycine. Exposure of the glycine at the C-terminus is essential for ATG8 proteins conjugation to phosphatidylethanolamine (PE) and insertion to membranes, which is necessary for autophagy. Protease activity is also required to counteract formation of high-molecular weight conjugates of ATG8 proteins (ATG8ylation): acts as a deubiquitinating-like enzyme that removes ATG8 conjugated to other proteins, such as ATG3. In addition to the protease activity, also mediates delipidation of ATG8 family proteins. Catalyzes delipidation of PE-conjugated forms of ATG8 proteins during macroautophagy. Also involved in non-canonical autophagy, a parallel pathway involving conjugation of ATG8 proteins to single membranes at endolysosomal compartments, by catalyzing delipidation of ATG8 proteins conjugated to phosphatidylserine (PS). This is Cysteine protease ATG4B from Gallus gallus (Chicken).